The following is a 299-amino-acid chain: Probable lipid kinase YegS (299 aa).

Residues 2-133 (ANFPASLLIL…IDMARVNDKT (132 aa)) enclose the DAGKc domain. ATP-binding positions include T40, 66–72 (GDGTINE), and T95. The Mg(2+) site is built by L215, D218, and L220. E271 functions as the Proton acceptor in the catalytic mechanism.

The protein belongs to the diacylglycerol/lipid kinase family. YegS lipid kinase subfamily. The cofactor is Mg(2+). Ca(2+) serves as cofactor.

Its subcellular location is the cytoplasm. In terms of biological role, probably phosphorylates lipids; the in vivo substrate is unknown. This Salmonella newport (strain SL254) protein is Probable lipid kinase YegS.